We begin with the raw amino-acid sequence, 196 residues long: Alpha-crystallin A chain (196 aa).

Residue M1 is modified to N-acetylmethionine. The interval 1–63 is required for complex formation with BFSP1 and BFSP2; sequence MDVTIQHPWF…RTVLDSGISE (63 aa). Q6 carries the deamidated glutamine; partial modification. Residue S45 is modified to Phosphoserine. Residue Q50 is modified to Deamidated glutamine; partial. The region spanning 76 to 185 is the sHSP domain; the sequence is HAGNPKNNPG…GHSERAIPVS (110 aa). N6-acetyllysine occurs at positions 93 and 122. Residue H123 coordinates Zn(2+). N124 is subject to Deamidated asparagine; partial. Zn(2+)-binding residues include E125 and H130. At S145 the chain carries Phosphoserine. Residue N146 is modified to Deamidated asparagine; partial. The tract at residues 168–196 is disordered; the sequence is KVQSGLDAGHSERAIPVSREEKPSSAPSS. Residue Q170 is modified to Deamidated glutamine; partial. The segment covering 176-190 has biased composition (basic and acidic residues); the sequence is GHSERAIPVSREEKP. Position 177 (H177) interacts with Zn(2+). Residue S185 is glycosylated (O-linked (GlcNAc) serine).

The protein belongs to the small heat shock protein (HSP20) family. Heteropolymer composed of three CRYAA and one CRYAB subunits. Inter-subunit bridging via zinc ions enhances stability, which is crucial as there is no protein turn over in the lens. Can also form homodimers and homotetramers (dimers of dimers) which serve as the building blocks of homooligomers. Within homooligomers, the zinc-binding motif is created from residues of 3 different molecules. His-123 and Glu-125 from one molecule are ligands of the zinc ion, and His-130 and His-177 residues from additional molecules complete the site with tetrahedral coordination geometry. Part of a complex required for lens intermediate filament formation composed of BFSP1, BFSP2 and CRYAA. Post-translationally, acetylation at Lys-93 may increase chaperone activity. In terms of processing, undergoes age-dependent proteolytical cleavage at the C-terminus. Cleavage by m-calpain produces specifically alpha-crystallin A(1-162), cleavage by Capn3/Lp82 produces specifically alpha-crystallin A(1-168) which is the major truncated form during normal maturation and induced cataract formation. As to expression, highly expressed in eye lens. Also expressed in non-lenticular tissues such as brain, spleen, liver, lung, skin, small intestine and a several epithelial and fibroblast cell lines with highest levels in spleen.

It is found in the cytoplasm. The protein resides in the nucleus. In terms of biological role, contributes to the transparency and refractive index of the lens. Acts as a chaperone, preventing aggregation of various proteins under a wide range of stress conditions. Required for the correct formation of lens intermediate filaments as part of a complex composed of BFSP1, BFSP2 and CRYAA. Functionally, inhibits bacterial growth in the lens. This chain is Alpha-crystallin A chain (Cryaa), found in Rattus norvegicus (Rat).